A 133-amino-acid polypeptide reads, in one-letter code: Large ribosomal subunit protein uL22 (133 aa).

The protein belongs to the universal ribosomal protein uL22 family. Part of the 50S ribosomal subunit.

This protein binds specifically to 23S rRNA; its binding is stimulated by other ribosomal proteins, e.g. L4, L17, and L20. It is important during the early stages of 50S assembly. It makes multiple contacts with different domains of the 23S rRNA in the assembled 50S subunit and ribosome. Its function is as follows. The globular domain of the protein is located near the polypeptide exit tunnel on the outside of the subunit, while an extended beta-hairpin is found that lines the wall of the exit tunnel in the center of the 70S ribosome. The chain is Large ribosomal subunit protein uL22 from Borrelia garinii subsp. bavariensis (strain ATCC BAA-2496 / DSM 23469 / PBi) (Borreliella bavariensis).